Here is a 238-residue protein sequence, read N- to C-terminus: 1-(5-phosphoribosyl)-5-[(5-phosphoribosylamino)methylideneamino] imidazole-4-carboxamide isomerase (238 aa).

The active-site Proton acceptor is aspartate 8. The active-site Proton donor is the aspartate 129.

This sequence belongs to the HisA/HisF family.

It is found in the cytoplasm. It catalyses the reaction 1-(5-phospho-beta-D-ribosyl)-5-[(5-phospho-beta-D-ribosylamino)methylideneamino]imidazole-4-carboxamide = 5-[(5-phospho-1-deoxy-D-ribulos-1-ylimino)methylamino]-1-(5-phospho-beta-D-ribosyl)imidazole-4-carboxamide. It participates in amino-acid biosynthesis; L-histidine biosynthesis; L-histidine from 5-phospho-alpha-D-ribose 1-diphosphate: step 4/9. The sequence is that of 1-(5-phosphoribosyl)-5-[(5-phosphoribosylamino)methylideneamino] imidazole-4-carboxamide isomerase from Paracoccus denitrificans (strain Pd 1222).